A 457-amino-acid polypeptide reads, in one-letter code: DDB1- and CUL4-associated factor 10 (457 aa).

WD repeat units lie at residues 65 to 104 (RTHGAVFNLEYSPDGSVLTVACEQTEVLLFDPVSSKHIKT), 108 to 146 (AHEDCVNNIRFLDNRMFATCSDDTTIALWDLRKLNSKVC), 150 to 189 (GHTSWVKNIEYDTNTRLLVTSGFDGNVIIWDTNRCTEDGC), and 195 to 234 (FHTRFLMRMRLTPDCSKMLISTSSGYLLILHELDLTKSLE). Residues 246–265 (TASTSDMTSTSSDTRPSSSP) are compositionally biased toward low complexity. The tract at residues 246–304 (TASTSDMTSTSSDTRPSSSPCHNSDLGPLFEKHMSRSSQREGASPRNSLEVLTPEVPGE) is disordered. Residues 281-292 (RSSQREGASPRN) show a composition bias toward polar residues. WD repeat units follow at residues 306-346 (DRGN…QEGA), 368-406 (VGRGYIKELCFSPDGRMIASPYAYGIRLLGFDSQCKELV), and 424-457 (SHKDVVLTTKFSPTHCQIASGCLSGRVTLYQPKF).

This sequence belongs to the WD repeat DCAF10 family.

Its pathway is protein modification; protein ubiquitination. In terms of biological role, may function as a substrate receptor for CUL4-DDB1 E3 ubiquitin-protein ligase complex. This chain is DDB1- and CUL4-associated factor 10 (dcaf10), found in Xenopus tropicalis (Western clawed frog).